Consider the following 376-residue polypeptide: tRNA-specific 2-thiouridylase MnmA (376 aa).

Residues 17 to 24 (GMSGGVDS) and M43 contribute to the ATP site. The interval 103–105 (NPD) is interaction with target base in tRNA. The Nucleophile role is filled by C108. The cysteines at positions 108 and 204 are disulfide-linked. Position 132 (G132) interacts with ATP. Positions 154 to 156 (KDQ) are interaction with tRNA. Catalysis depends on C204, which acts as the Cysteine persulfide intermediate. Residues 316–317 (RY) form an interaction with tRNA region.

This sequence belongs to the MnmA/TRMU family.

The protein resides in the cytoplasm. It catalyses the reaction S-sulfanyl-L-cysteinyl-[protein] + uridine(34) in tRNA + AH2 + ATP = 2-thiouridine(34) in tRNA + L-cysteinyl-[protein] + A + AMP + diphosphate + H(+). Functionally, catalyzes the 2-thiolation of uridine at the wobble position (U34) of tRNA, leading to the formation of s(2)U34. This Pseudomonas syringae pv. syringae (strain B728a) protein is tRNA-specific 2-thiouridylase MnmA.